Here is a 33-residue protein sequence, read N- to C-terminus: Glucagon-2 (33 aa).

It belongs to the glucagon family.

It localises to the secreted. Promotes hydrolysis of glycogen and lipids, and raises the blood sugar level. The chain is Glucagon-2 (gcg2) from Oreochromis niloticus (Nile tilapia).